The following is a 112-amino-acid chain: Large ribosomal subunit protein uL22 (112 aa).

This sequence belongs to the universal ribosomal protein uL22 family. As to quaternary structure, part of the 50S ribosomal subunit.

This protein binds specifically to 23S rRNA; its binding is stimulated by other ribosomal proteins, e.g. L4, L17, and L20. It is important during the early stages of 50S assembly. It makes multiple contacts with different domains of the 23S rRNA in the assembled 50S subunit and ribosome. Functionally, the globular domain of the protein is located near the polypeptide exit tunnel on the outside of the subunit, while an extended beta-hairpin is found that lines the wall of the exit tunnel in the center of the 70S ribosome. This Anaplasma phagocytophilum (strain HZ) protein is Large ribosomal subunit protein uL22.